Consider the following 315-residue polypeptide: 31 kDa ribonucleoprotein, chloroplastic (315 aa).

A chloroplast-targeting transit peptide spans methionine 1–serine 71. The interval alanine 114–proline 133 is disordered. Over residues glycine 115–proline 133 the composition is skewed to acidic residues. 2 consecutive RRM domains span residues alanine 136–arginine 214 and tyrosine 230–aspartate 308.

It localises to the plastid. It is found in the chloroplast. In terms of biological role, could be involved in splicing and/or processing of chloroplast RNA's. This Nicotiana sylvestris (Wood tobacco) protein is 31 kDa ribonucleoprotein, chloroplastic.